A 488-amino-acid polypeptide reads, in one-letter code: Tyrosine-protein kinase Srms (488 aa).

One can recognise an SH3 domain in the interval 51 to 112; it reads PFPQLFLALY…PITHVAKASP (62 aa). The SH2 domain maps to 120-212; the sequence is WYFSGVSRTQ…LIQNPLLQPC (93 aa). Positions 230 to 488 constitute a Protein kinase domain; that stretch reads FALGRKLGEG…KLHAIHRCHP (259 aa). Residues 236–244 and K258 each bind ATP; that span reads LGEGYFGEV. D350 (proton acceptor) is an active-site residue. Y380 carries the post-translational modification Phosphotyrosine; by autocatalysis.

It belongs to the protein kinase superfamily. Tyr protein kinase family. SRC subfamily. Interacts (via the SH2 and SH3 domains) with DOK1. Interacts with KHDRBS1/SAM68 and VIM. Highly expressed in most breast cancers (at protein level).

Its subcellular location is the cytoplasm. The enzyme catalyses L-tyrosyl-[protein] + ATP = O-phospho-L-tyrosyl-[protein] + ADP + H(+). Functionally, non-receptor tyrosine-protein kinase which phosphorylates DOK1 on tyrosine residues. Also phosphorylates KHDRBS1/SAM68 and VIM on tyrosine residues. Phosphorylation of KHDRBS1 is EGF-dependent. Phosphorylates OTUB1, promoting deubiquitination of RPTOR. This is Tyrosine-protein kinase Srms (SRMS) from Homo sapiens (Human).